The sequence spans 388 residues: Succinate--CoA ligase [ADP-forming] subunit beta (388 aa).

The ATP-grasp domain occupies 9–244 (KQIFAKYKLP…PSQDDPREAL (236 aa)). Residues Lys-46, 53–55 (GRG), Glu-99, Ala-102, and Glu-107 each bind ATP. Residues Asn-199 and Asp-213 each contribute to the Mg(2+) site. Residues Asn-264 and 321–323 (GIV) each bind substrate.

It belongs to the succinate/malate CoA ligase beta subunit family. In terms of assembly, heterotetramer of two alpha and two beta subunits. Requires Mg(2+) as cofactor.

The enzyme catalyses succinate + ATP + CoA = succinyl-CoA + ADP + phosphate. It catalyses the reaction GTP + succinate + CoA = succinyl-CoA + GDP + phosphate. The protein operates within carbohydrate metabolism; tricarboxylic acid cycle; succinate from succinyl-CoA (ligase route): step 1/1. Succinyl-CoA synthetase functions in the citric acid cycle (TCA), coupling the hydrolysis of succinyl-CoA to the synthesis of either ATP or GTP and thus represents the only step of substrate-level phosphorylation in the TCA. The beta subunit provides nucleotide specificity of the enzyme and binds the substrate succinate, while the binding sites for coenzyme A and phosphate are found in the alpha subunit. In Glaesserella parasuis serovar 5 (strain SH0165) (Haemophilus parasuis), this protein is Succinate--CoA ligase [ADP-forming] subunit beta.